The chain runs to 591 residues: Dolichyl-phosphooligosaccharide-protein glycotransferase 1 (591 aa).

At 1 to 5 (MDRKV) the chain is on the cytoplasmic side. A helical membrane pass occupies residues 6 to 26 (LMLAVILFALAVRFQNFGEIF). Residues 27–67 (DSGIYYTGYDSYYHMRLVEVMVKESFRPDYDYYINYPFGLK) are Extracellular-facing. The DXD motif 1 motif lies at 34 to 36 (GYD). Position 36 (aspartate 36) interacts with Mn(2+). Residues 68 to 88 (ITWPPLFDYILAFPGMLFGFH) traverse the membrane as a helical segment. Over 89 to 91 (SSE) the chain is Cytoplasmic. The chain crosses the membrane as a helical span at residues 92 to 112 (IFAVFLPVILGVLSVVLICLT). Topologically, residues 113-121 (ALQIVNNQT) are extracellular. A helical transmembrane segment spans residues 122 to 142 (FALISAFIYAAAPVAVWKTVL). Over 143–147 (GQADH) the chain is Cytoplasmic. A Mn(2+)-binding site is contributed by aspartate 146. The DXD motif 2 signature appears at 146–148 (DHH). Position 147 (histidine 147) interacts with a glycophospholipid. Mn(2+) is bound at residue histidine 148. Residues 148-168 (HALVIFLFLLSAYLLLKDGVW) traverse the membrane as a helical segment. Residue lysine 169 is a topological domain, extracellular. The chain crosses the membrane as a helical span at residues 170-190 (ILAGLPMLFMALAWLGSPIYG). At 191–219 (ALLAFSALVHFDRKALRLVAASYLIPAIS) the chain is on the cytoplasmic side. Residues 220 to 240 (FVLYPPVGISFFGLAAFLFVG) traverse the membrane as a helical segment. Residues 241-252 (SVVKGYEDRFRN) lie on the Extracellular side of the membrane. Residues 253–273 (ATIYYIALSLATVLIIYFIPL) traverse the membrane as a helical segment. Residues 274-275 (PH) lie on the Cytoplasmic side of the membrane. Residues 276–296 (FEFVKGGINYIFGANIYLPTI) traverse the membrane as a helical segment. Residues 295-298 (TISE) carry the TIXE motif motif. The Extracellular segment spans residues 297 to 303 (SEARSLQ). The chain crosses the membrane as a helical span at residues 304–324 (IFEIISASGYIYFIFALISVL). Residues 325 to 327 (FFR) are Cytoplasmic-facing. A helical transmembrane segment spans residues 328 to 344 (NRFVLSMFFLSFILALM). The Extracellular portion of the chain corresponds to 345 to 347 (QLR). Residue arginine 347 coordinates a glycophospholipid. Residues 348–368 (FTEVLVVPSALLSAYLVSLVL) form a helical membrane-spanning segment. Residues 369 to 408 (ERLEYPVFEKADEEEKSRRRKRKDRKVKQKNAEVEWKDHA) lie on the Cytoplasmic side of the membrane. A helical membrane pass occupies residues 409 to 429 (VVAAFLVILAIPCIVVAVVPF). Residues 430-591 (DLTEDWKEAL…DVKIFEVVGS (162 aa)) are Extracellular-facing. Positions 465–467 (WWD) are interacts with target acceptor peptide in protein substrate. The WWDYG motif signature appears at 465–469 (WWDYG). The DKi motif motif lies at 521–535 (EITMKDANNTKFPAI).

This sequence belongs to the STT3 family. The cofactor is Mn(2+). Mg(2+) is required as a cofactor. It depends on Zn(2+) as a cofactor.

Its subcellular location is the cell membrane. It catalyses the reaction an archaeal dolichyl phosphooligosaccharide + [protein]-L-asparagine = an archaeal dolichyl phosphate + a glycoprotein with the oligosaccharide chain attached by N-beta-D-glycosyl linkage to a protein L-asparagine.. The protein operates within protein modification; protein glycosylation. In terms of biological role, oligosaccharyl transferase (OST) that catalyzes the initial transfer of a defined glycan (a GalNAc-linked heptasaccharide composed of 4 Hex, 3 dHex and a sulfate for A.fulgidus AglB-S) from the lipid carrier dolichol-monophosphate to an asparagine residue within an Asn-X-Ser/Thr consensus motif in nascent polypeptide chains, the first step in protein N-glycosylation. The sequence is that of Dolichyl-phosphooligosaccharide-protein glycotransferase 1 (aglB1) from Archaeoglobus fulgidus (strain ATCC 49558 / DSM 4304 / JCM 9628 / NBRC 100126 / VC-16).